Reading from the N-terminus, the 137-residue chain is Large ribosomal subunit protein uL16c (137 aa).

It belongs to the universal ribosomal protein uL16 family. In terms of assembly, part of the 50S ribosomal subunit.

It is found in the plastid. The chain is Large ribosomal subunit protein uL16c (rpl16) from Helicosporidium sp. subsp. Simulium jonesii (Green alga).